Reading from the N-terminus, the 414-residue chain is F-box protein At3g26010 (414 aa).

One can recognise an F-box domain in the interval 5–52 (NRTIHLTDAIWTEILARLPLRIIARFKSVSKTWKSTIESVYFRRLFVS).

This chain is F-box protein At3g26010, found in Arabidopsis thaliana (Mouse-ear cress).